The chain runs to 202 residues: Tetratricopeptide repeat protein 36 (202 aa).

TPR repeat units lie at residues Ala-49–Arg-82, Ala-83–Ala-116, and Arg-121–Phe-154.

Belongs to the TTC36 family.

In Xenopus tropicalis (Western clawed frog), this protein is Tetratricopeptide repeat protein 36 (ttc36).